Consider the following 321-residue polypeptide: MISGVLYALLAGLMWGLIFVGPLIVPEYPAMLQSMGRYLALGLIALPIAWLGRVRLRQLARRDWLTALMLTMMGNLIYYFCLASAIQRTGAPVSTMIIGTLPVVIPVFANLLYSQRDGKLAWGKLAPALICIGIGLACVNIAELNHGLPDFDWARYTSGIVLALVSVVCWAWYALRNARWLRENPDKHPMMWATAQALVTLPVSLIGYLVACYWLNTQTPDFSLPFGPRPLVFISLMVAIAVLCSWVGALCWNVASQLLPTVILGPLIVFETLAGLLYTFLLRQQMPPLMTLSGIALLVIGVVIAVRAKPEKPLTESVSES.

The Cytoplasmic portion of the chain corresponds to methionine 1–glycine 4. The chain crosses the membrane as a helical span at residues valine 5 to valine 25. The region spanning leucine 13 to isoleucine 141 is the EamA domain. Residues proline 26 to alanine 30 are Periplasmic-facing. A helical membrane pass occupies residues methionine 31–leucine 51. Residues glycine 52–leucine 65 are Cytoplasmic-facing. A helical membrane pass occupies residues threonine 66–isoleucine 86. Residues glutamine 87–proline 92 are Periplasmic-facing. Residues valine 93–tyrosine 113 traverse the membrane as a helical segment. Over serine 114–leucine 120 the chain is Cytoplasmic. A helical transmembrane segment spans residues alanine 121–isoleucine 141. Residues alanine 142–alanine 154 are Periplasmic-facing. The helical transmembrane segment at arginine 155–leucine 175 threads the bilayer. Over arginine 176 to threonine 194 the chain is Cytoplasmic. A helical transmembrane segment spans residues alanine 195 to leucine 215. At asparagine 216 to proline 230 the chain is on the periplasmic side. A helical transmembrane segment spans residues leucine 231–cysteine 251. The Cytoplasmic portion of the chain corresponds to tryptophan 252–threonine 261. The chain crosses the membrane as a helical span at residues valine 262–leucine 282. The Periplasmic segment spans residues arginine 283–glutamine 285. Residues methionine 286 to valine 306 form a helical membrane-spanning segment. The Cytoplasmic portion of the chain corresponds to arginine 307–serine 321.

Its subcellular location is the cell inner membrane. The polypeptide is Inner membrane protein YtfF (ytfF) (Escherichia coli (strain K12)).